A 447-amino-acid chain; its full sequence is MTLVLLLSIFAICFSSVAFIQLLPTRREKKSSEAHDAVSVQIDTIVCLLRPPRSSSNSPTLNRVADSTPNQELLDHPLISIVALPSPPALLQTKKKFLFPVAAILKVLQQAWHLWAALGYRTGPAHWILVQNPPAAPTLALALLACHLRHSRLIIDWHNFGYSILALKLGSGHPMVKLMEWYEKAFSCYATAHFCVSNAMARILREQFEIKKPLMVLHDRPSSAFSPIFDEKQRLAILSSIPETSQSAIDIIEGRCRLLVSSTSWTPDEDFSLLLDALCRYSTSAKSSGLPSVPLLVIITGKGPLKDMYLSQIDKLKAEGKLFNVFIKTAWLSFEDYAQLLACATLGVCLHTSSSGVDLPMKVVDMFGAGLPVVGWDQYEAWPELVTEGVTGLGFDSADRLSGLLKSVLGGDGSALKVLREGAVKESRNRWDQTWDPIAGTFLGLVT.

Topologically, residues 1-2 (MT) are cytoplasmic. A helical; Signal-anchor for type II membrane protein membrane pass occupies residues 3 to 23 (LVLLLSIFAICFSSVAFIQLL). At 24-447 (PTRREKKSSE…IAGTFLGLVT (424 aa)) the chain is on the lumenal side.

It belongs to the glycosyltransferase group 1 family. Glycosyltransferase 33 subfamily.

It localises to the endoplasmic reticulum membrane. It carries out the reaction an N,N'-diacetylchitobiosyl-diphospho-di-trans,poly-cis-dolichol + GDP-alpha-D-mannose = a beta-D-Man-(1-&gt;4)-beta-D-GlcNAc-(1-&gt;4)-alpha-D-GlcNAc-diphospho-di-trans,poly-cis-dolichol + GDP + H(+). Its pathway is protein modification; protein glycosylation. Its function is as follows. Participates in the formation of the lipid-linked precursor oligosaccharide for N-glycosylation. Involved in assembling the dolichol-pyrophosphate-GlcNAc(2)-Man(5) intermediate on the cytoplasmic surface of the ER. In Arthroderma benhamiae (strain ATCC MYA-4681 / CBS 112371) (Trichophyton mentagrophytes), this protein is Chitobiosyldiphosphodolichol beta-mannosyltransferase.